The primary structure comprises 239 residues: Small ribosomal subunit protein uS3 (239 aa).

In terms of domain architecture, KH type-2 spans 39–107 (IREFIKEECK…ELHLNIVEVR (69 aa)). Positions 212–221 (PQARDRKAQE) are enriched in basic and acidic residues. Positions 212 to 239 (PQARDRKAQELQDGPAPRGAGGNRRGDR) are disordered. Gly residues predominate over residues 230 to 239 (GAGGNRRGDR).

Belongs to the universal ribosomal protein uS3 family. Part of the 30S ribosomal subunit. Forms a tight complex with proteins S10 and S14.

Binds the lower part of the 30S subunit head. Binds mRNA in the 70S ribosome, positioning it for translation. This Ruegeria sp. (strain TM1040) (Silicibacter sp.) protein is Small ribosomal subunit protein uS3.